Here is a 636-residue protein sequence, read N- to C-terminus: Polyglycine hydrolase (636 aa).

The signal sequence occupies residues 1–22 (MHSLSLRRLLTSVLSLCSCSSA). N-linked (GlcNAc...) asparagine glycans are attached at residues asparagine 30 and asparagine 151. Cysteine 141 and cysteine 175 form a disulfide bridge. Serine 363 is an active-site residue. 2 N-linked (GlcNAc...) asparagine glycosylation sites follow: asparagine 383 and asparagine 481. Positions 512–540 (TEDRIVQESKNTGQDPVHPQSAKLVPGPH) are disordered.

The protein belongs to the peptidase S12 family.

It is found in the secreted. The catalysed reaction is a glycyl-glycyl-[protein] + H2O = N-terminal glycyl-[protein] + [protein]-C-terminal glycine. Its function is as follows. Serine-type endopeptidase that cleaves Gly-Gly bonds in the polyglycine linker of host plant class IV chitinases to disrupt their chitin-binding, and thereby plays a role in lowering the defense responses of the host to the fungus. Degrades Z.mays Endochitinase A (CHIA) in vitro, although corn is not its host species. This Fusarium vanettenii (strain ATCC MYA-4622 / CBS 123669 / FGSC 9596 / NRRL 45880 / 77-13-4) (Fusarium solani subsp. pisi) protein is Polyglycine hydrolase.